The chain runs to 326 residues: MSRADEGRLIHLAKKREREKEDIEKQLRKLEEDKEKCKVGITSKFTANYETMEESVKSKTYGLVSLDDMKNIQKNEISNRDLQVARGASSSTSLAKDSQEAREKEEHVAKHTQKRVLSFAYEDEEEDEDAAPIVPKKRVGMDPTVDTSFLPDKEREEFLRKKKEELAAEWRVKQNTEKNEEITVAYAYWDGSSHRKNMKVKKGNTISQCLARAIEALKKEFTELKACTPENLMFVKEDLIIPHFYTFQDFIVTKAMGKTGPLFVFDSASDVRIRQDAALDYGESHPAKIVLRSWYEKNKHIYPASRWEPFVPSKKYGRNFDDLSDL.

The segment at 76-112 (EISNRDLQVARGASSSTSLAKDSQEAREKEEHVAKHT) is disordered. Positions 97–109 (DSQEAREKEEHVA) are enriched in basic and acidic residues.

This sequence belongs to the FAM50 family.

The sequence is that of Protein FAM50 homolog from Caenorhabditis briggsae.